The primary structure comprises 692 residues: Formate hydrogenlyase transcriptional activator (692 aa).

The 143-residue stretch at 202-344 (DIDELVSEVA…QIAERVAIAV (143 aa)) folds into the GAF domain. In terms of domain architecture, Sigma-54 factor interaction spans 381–610 (IIGRSEAMYN…LENVVERAVL (230 aa)). ATP is bound by residues 409 to 416 (GETGTGKE) and 472 to 481 (ADKSSLFLDE). Residues 663-682 (PKGAAQRLGLKRTTLLSRMK) constitute a DNA-binding region (H-T-H motif).

Its function is as follows. Required for induction of expression of the formate dehydrogenase H and hydrogenase-3 structural genes. This is Formate hydrogenlyase transcriptional activator (fhlA) from Salmonella typhimurium (strain SL1344).